Consider the following 270-residue polypeptide: Monofunctional glycosyltransferase (270 aa).

The segment at 1-35 (MKRSDRYKTYNKPNDSNDSNQLHHNTYFKPVNKPQ) is disordered. Residues 11 to 24 (NKPNDSNDSNQLHH) show a composition bias toward polar residues. The chain crosses the membrane as a helical span at residues 47–67 (LLIPILIIIGIIIGVMYALSL).

Belongs to the glycosyltransferase 51 family.

It is found in the cell membrane. It catalyses the reaction [GlcNAc-(1-&gt;4)-Mur2Ac(oyl-L-Ala-gamma-D-Glu-L-Lys-D-Ala-D-Ala)](n)-di-trans,octa-cis-undecaprenyl diphosphate + beta-D-GlcNAc-(1-&gt;4)-Mur2Ac(oyl-L-Ala-gamma-D-Glu-L-Lys-D-Ala-D-Ala)-di-trans,octa-cis-undecaprenyl diphosphate = [GlcNAc-(1-&gt;4)-Mur2Ac(oyl-L-Ala-gamma-D-Glu-L-Lys-D-Ala-D-Ala)](n+1)-di-trans,octa-cis-undecaprenyl diphosphate + di-trans,octa-cis-undecaprenyl diphosphate + H(+). It functions in the pathway cell wall biogenesis; peptidoglycan biosynthesis. Peptidoglycan polymerase that catalyzes glycan chain elongation using lipid-linked disaccharide-pentapeptide as the substrate. The protein is Monofunctional glycosyltransferase of Staphylococcus saprophyticus subsp. saprophyticus (strain ATCC 15305 / DSM 20229 / NCIMB 8711 / NCTC 7292 / S-41).